The following is a 34-amino-acid chain: Photosystem II reaction center protein Psb30 (34 aa).

Residues valine 5–tryptophan 25 form a helical membrane-spanning segment.

This sequence belongs to the Psb30/Ycf12 family. PSII is composed of 1 copy each of membrane proteins PsbA, PsbB, PsbC, PsbD, PsbE, PsbF, PsbH, PsbI, PsbJ, PsbK, PsbL, PsbM, PsbT, PsbX, PsbY, PsbZ, Psb30/Ycf12, peripheral proteins of the oxygen-evolving complex and a large number of cofactors. It forms dimeric complexes.

It is found in the plastid. Its subcellular location is the chloroplast thylakoid membrane. Its function is as follows. A core subunit of photosystem II (PSII), probably helps stabilize the reaction center. This chain is Photosystem II reaction center protein Psb30, found in Cyanidioschyzon merolae (strain NIES-3377 / 10D) (Unicellular red alga).